The primary structure comprises 430 residues: Glucose-6-phosphate isomerase (430 aa).

The active-site Proton donor is E284. Residues H305 and K420 contribute to the active site.

The protein belongs to the GPI family.

Its subcellular location is the cytoplasm. It catalyses the reaction alpha-D-glucose 6-phosphate = beta-D-fructose 6-phosphate. Its pathway is carbohydrate biosynthesis; gluconeogenesis. It functions in the pathway carbohydrate degradation; glycolysis; D-glyceraldehyde 3-phosphate and glycerone phosphate from D-glucose: step 2/4. Its function is as follows. Catalyzes the reversible isomerization of glucose-6-phosphate to fructose-6-phosphate. The sequence is that of Glucose-6-phosphate isomerase from Mycoplasma pneumoniae (strain ATCC 29342 / M129 / Subtype 1) (Mycoplasmoides pneumoniae).